Here is a 2525-residue protein sequence, read N- to C-terminus: MQSDTNNSPLSWEELRSGAASSDANSSPPEPIAIIGMSCRLSGSAQDPSSLWEMLTSGRTAWTPGPGQRFNMEAFQSSSADTFGMTNTGGGHFLKEDVAAFDAAFFGIHAVEAKAIDPQHRLLLEIAYECFDNSGLNMDSLWGSNTGVYVGQWANDYHEIQTRDIDAPPLYLTTGTGPAISSNRISYFFNLRGPSFTVDTGCSSGFVALHQAVQSLRSGETSQCFVGGVNLMLDPQRFVYQSKLKMFSNEGRSFAFDSRANGYGRGEGCTAVMLKPLSAALRDGDQIRAVIRNSVLNQDGRTAGITVPSPEAQEEAILKAYGDAMLELRADYVEAHGTGTKVGDPKEAGAIAAALARGNSPGAALPIGSIKANIGHTESAAGLAGLIKAVLMLEHGIIPPQANYESPNPDLCLEERGLRVPTQLERRTLRRISVNSFGYGGTNAHVVVDASADALCALSSLGRHTSAQRVFFISGASEKACQRICARLAKYLARKSAWPETDTPELLAKLAYTLSKKSIHPYRLALVAQDINELVQQLISAAYSPVARQDRKGDTRIGLVFSGQGSQYAEMGRELLSSSAVFSRSIDRACQHLTELGSGWNMREELCRPQETTRINEPALSQPLTTAIQLALVDLLFDLKISVSAVVGHSSGEIAAAYAAEAISFEDAMTASYYRGSLTSSLVVGNPECDGAMLAVGADADVVNQRISEVGDAHGRMRIACFNSPSSVTVSGDAKAVNELRKLLVAEGTFNRMLPTNGAAYHSHQMESMNKEYTLSLQKKLSPKKKTSISAARIFSSVTGKENDLQTPLDGVYWAANLLSPVLFSQALREMCEAKYDGKALDMIIEVGPHSQLGGAVKQTVKALKSSSGIAYTSVLKKGKKARQAFLECLGALHVCTATVDLNASNGFSATHAPKLLVDLPPYPFDHERSFWHETRISKDYRHRKHAPHELLGTFAHDTNRVEPRWRQFLSLKQTPWLKSHAVQGQIVFPGAGFLTMAIQAMLQHMHATSPLVKVHSLLLRNVSLSRALVLPADGPDVEITLTLRPESHTAKSSSAVWSEFRIFTVTSESVWTEHCRGLVHAETQAADVDEIAADVKDTLEAGETCVHEVTPQKLYHLGSEIGLDWQHPFNNVSNIRTSRDACVAVARKTVLDSDVGGMGDILHPTVLDSCLFHGLSAVLVLERGSTSTFVPNFIEQLQIFNRTPDSSAELLSTSKLSRDTSTCDVVVQEKGCSPGQAVIFAAKGVHTTTLPGDTGLNEVIDDICHSQDWVTYVDAWTPEHCDRFVQKAVKEVDPERVPDGPRRQFFEWMKIYAETPLDEQTLPPASISADHWAFYEGVKRLGPHLADILVEKTDPLALLTPDNLLGQLYNTERCRRCIVQMAEYCHALGQQSPGLKVLEVGAGTASATLPAIEALNGRGSINAHSYTFTDLSPAFFDPAKERLGSFADAVKFDILDIERCPLEQGFQEAGYDLIIASNVIHATQRIDAVLANIKKLLKPGGKFMLMELTVPTPHYNLLFGVFKGWWAGYDEGRQLSPLIPPSEWVTRLTRAKFSPAELWFQDYPEENGGTISVLIASAPWDVAQVELPAIDVVTTEYSALESGDEAVLRTLSSSEELLNTNISVGCLSDISSKDNIVIILPEVARYLCQSLHGSAWERFKHLVLNARAVLLVGCSSSYCSDFVSGGIWLGFARCLRLELPRLRVITLDLAVERALMMKRLTSVLPTLMRSIKQGLALDGRVEVENEFRESDGQLYVSRLVSNDKMSEYVHRSRQRAQPKLLSFMDPQRPMTAELRVPGLLESIRWKDDVKATAVGPDEVKLELRAASINFKDVLIAAGQLEGINEMRNDCSGVVIEVGSNMCDRFKAGDRVCALYSRSYTNYPVVHGDCCQVVPDSMTYEEATALPVVWTTVYYSLVDAGRLEQGDKILIHSAAGAVGQAAIMLAKHIGAEVFATVGNSEKQTLLRERYGIADDHIFSSRTPAFHDKIKRLTGGYGVDVVLNSLAGDQFRHSCNLVAPFGRFVEIGRKDLMDDARMSMGFLLKNVTFAYVDLSLIMEVKRPLARRLLREVVNLAASGAIRPVTLTTLPITEIETAFRMIQAGKHTGKIVLRVAQDQIVKADPPAPAHAELKPNATYLLVGGFGGLGRAVITWMGSRGAKNILVISRSGSPDKQGQILIKDMEAMGVKVVAEKCDVTAEDEVASLSKLAADRGLPPIRGVIHSAMVLQDSVLEEMTADEWCRALAPKYAGSLNLHRSFGNEVDFFIFMSSAVALRGNVGQSNYAAACSFQDALARYRTAAGLPAFSINVGPVREVGFVSENPQVAAALRKQGLGTISMADLLTLLNYAVVHRNPEESVCSIGMLPRDTDESLTDRRFAHLVRHDVVSQTADAGGVQFADIPRLLDGAAPGAQLLENISQLVLMQLSKLIASPVETLSAAQSLDSYGVDSLVAVELRNWVGAYLQANVPLMVLRGTSSIHELAKIIAKESRRPSTLLWRSTLLYSYPDLDKLQHDMPAQISWPANS.

The span at 1–10 (MQSDTNNSPL) shows a compositional bias: polar residues. Positions 1–29 (MQSDTNNSPLSWEELRSGAASSDANSSPP) are disordered. Residues 29-450 (PEPIAIIGMS…GTNAHVVVDA (422 aa)) enclose the Ketosynthase family 3 (KS3) domain. Active-site for beta-ketoacyl synthase activity residues include Cys-202, His-336, and His-376. The tract at residues 560-895 (VFSGQGSQYA…FLECLGALHV (336 aa)) is malonyl-CoA:ACP transacylase (MAT) domain. An N-terminal hotdog fold region spans residues 949–1087 (HELLGTFAHD…GLVHAETQAA (139 aa)). The interval 949 to 1252 (HELLGTFAHD…AKGVHTTTLP (304 aa)) is dehydratase (DH) domain. The PKS/mFAS DH domain maps to 949-1257 (HELLGTFAHD…TTTLPGDTGL (309 aa)). The active-site Proton acceptor; for dehydratase activity is His-981. Residues 1107 to 1257 (VHEVTPQKLY…TTTLPGDTGL (151 aa)) are C-terminal hotdog fold. Asp-1169 acts as the Proton donor; for dehydratase activity in catalysis. Positions 1399–1504 (LEVGAGTASA…KKLLKPGGKF (106 aa)) are methyltransferase (CMet) domain. The interval 1799–2111 (GLLESIRWKD…AGKHTGKIVL (313 aa)) is enoyl reductase (ER) domain. Residues 2411-2489 (AQLLENISQL…ELAKIIAKES (79 aa)) form the Carrier domain. The segment at 2411–2489 (AQLLENISQL…ELAKIIAKES (79 aa)) is ketoreductase (KR) domain. An O-(pantetheine 4'-phosphoryl)serine modification is found at Ser-2449.

It participates in secondary metabolite biosynthesis. Its function is as follows. Highly reducing polyketide synthase; part of the gene cluster that mediates the biosynthesis of beauveriolides I and III, cyclodepsipeptides acting as inhibitors of the acyl-CoA:cholesterol acyltransferase. The HR-PKS cm3B initiates the biosynthesis of beauveriolides by iteratively catalyzing the formation of the linear polyketide chain. The ATP-dependent acetyl-CoA ligase cm3D converts the polyketide carboxylic acid to a CoA thioester which id shuttled to the first T domain in the NRPS cm3A by the acetyltransferase cm3C. Cm3A contains 13 domains and assembles the polyketide chain, L-phenylalanine, L-alanine, and D-leucine (or D-allo-isoleucine) to form beauveriolide I (or beauveriolide III). The production of both beauveriolides I and III suggests the substrate adaptability of cm3B, using different amino acids as substrates. The sequence is that of Highly reducing polyketide synthase cm3B from Cordyceps militaris (strain CM01) (Caterpillar fungus).